Here is a 416-residue protein sequence, read N- to C-terminus: Phakinin (416 aa).

Residues 1–48 (MSERRVAMDLPSGSNASMPLQRHRVSSLRGTRSPSSLDSPPASRTSAV) are disordered. The residue at position 2 (Ser-2) is an N-acetylserine. Residues 2–115 (SERRVAMDLP…HATAEDLGGC (114 aa)) are head. A phosphoserine mark is found at Ser-27, Ser-33, Ser-36, and Ser-91. The span at 28-48 (LRGTRSPSSLDSPPASRTSAV) shows a compositional bias: polar residues. The IF rod domain occupies 105–416 (NHATAEDLGG…HALLDREESN (312 aa)). 2 coiled-coil regions span residues 199-240 (FRKA…SLSR) and 314-391 (LAAA…ERAH). The tract at residues 397 to 416 (GQLQKDVASYHALLDREESN) is tail.

The protein belongs to the intermediate filament family. In terms of assembly, part of a complex required for lens intermediate filament formation composed of BFSP1, BFSP2, and CRYAA. Found in a complex composed of PPL (via C-terminal linker domain), BFSP1 and BFSP2 in the retinal lens. Within the complex interacts with PPL (via C-terminal linker domain) and with BFSP1. Identified in a complex that contains VIM, EZR, AHNAK, BFSP1, BFSP2, ANK2, PLEC, PRX and spectrin. Interacts with LGSN. Interacts with VIM. In terms of tissue distribution, expressed in the deep and shallow cortices of the retina lens (at protein level).

Its subcellular location is the cell membrane. It is found in the cytoplasm. The protein resides in the cytoskeleton. It localises to the cell cortex. In terms of biological role, required for the correct formation of lens intermediate filaments as part of a complex composed of BFSP1, BFSP2 and CRYAA. Plays a role in maintenance of retinal lens optical clarity. This Rattus norvegicus (Rat) protein is Phakinin.